Reading from the N-terminus, the 661-residue chain is Hemocyanin C chain (661 aa).

A disulfide bond links C3 and C557. Positions 200, 204, 230, 350, 354, and 390 each coordinate Cu cation. N476 carries N-linked (GlcNAc...) asparagine glycosylation.

Belongs to the tyrosinase family. Hemocyanin subfamily. Hexamer of a number of different chains, of which A, B, and C have been identified. In terms of tissue distribution, hemolymph.

The protein localises to the secreted. Its subcellular location is the extracellular space. Hemocyanins are copper-containing oxygen carriers occurring freely dissolved in the hemolymph of many mollusks and arthropods. This chain is Hemocyanin C chain, found in Panulirus interruptus (California spiny lobster).